The primary structure comprises 204 residues: Probable peptidyl-tRNA hydrolase (204 aa).

Histidine 36 (proton acceptor) is an active-site residue. 2 residues coordinate tRNA: asparagine 86 and asparagine 132.

Belongs to the PTH family.

The enzyme catalyses an N-acyl-L-alpha-aminoacyl-tRNA + H2O = an N-acyl-L-amino acid + a tRNA + H(+). Its function is as follows. Peptidyl-tRNA hydrolase that cleaves nascent chains-tRNAs that are not stably fixed in the P-site of 60S ribosome-nascent chain complexes. Acts downstream of the ribosome-associated quality control (RQC) pathway to release non-ubiquitinated nascent chains from 60S and 80S ribosome-nascent chain complexes. Does not act on ubiquitinated nascent chains, which are cleaved by ANKZF1 for degradation. This is Probable peptidyl-tRNA hydrolase from Mus musculus (Mouse).